A 212-amino-acid polypeptide reads, in one-letter code: NEDD4 family-interacting protein 1 (212 aa).

The span at 1–14 shows a compositional bias: polar residues; that stretch reads MSEQSSSSRYQQLQ. The segment at 1 to 40 is disordered; that stretch reads MSEQSSSSRYQQLQNEEEPGENAQASADAPPPYSSIAGES. Over 1 to 107 the chain is Cytoplasmic; sequence MSEQSSSSRY…ADQLRIGNDG (107 aa). 2 short sequence motifs (PPxY motif) span residues 30-33 and 55-58; these read PPPY and PPSY. A helical membrane pass occupies residues 108–128; that stretch reads IFMLTFFMAFLFNWIGFFLSF. Residues 129-134 are Extracellular-facing; sequence CLTSSA. The helical transmembrane segment at 135–155 threads the bilayer; the sequence is AGRYGAISGFGLSLIKWILIV. Residues 156-163 lie on the Cytoplasmic side of the membrane; sequence RFSTYFPG. A helical membrane pass occupies residues 164–184; that stretch reads YFDGQYWLWWVFLVLGFLLFL. At 185–212 the chain is on the extracellular side; it reads RGFINYAKVRKMPDNFSTLPRTRVLFIY.

It is found in the golgi apparatus membrane. In terms of biological role, may play a role in Golgi structure maintenance. This Xenopus laevis (African clawed frog) protein is NEDD4 family-interacting protein 1 (ndfip1).